We begin with the raw amino-acid sequence, 245 residues long: 3-deoxy-manno-octulosonate cytidylyltransferase (245 aa).

Belongs to the KdsB family.

The protein localises to the cytoplasm. The enzyme catalyses 3-deoxy-alpha-D-manno-oct-2-ulosonate + CTP = CMP-3-deoxy-beta-D-manno-octulosonate + diphosphate. It participates in nucleotide-sugar biosynthesis; CMP-3-deoxy-D-manno-octulosonate biosynthesis; CMP-3-deoxy-D-manno-octulosonate from 3-deoxy-D-manno-octulosonate and CTP: step 1/1. It functions in the pathway bacterial outer membrane biogenesis; lipopolysaccharide biosynthesis. Functionally, activates KDO (a required 8-carbon sugar) for incorporation into bacterial lipopolysaccharide in Gram-negative bacteria. This is 3-deoxy-manno-octulosonate cytidylyltransferase from Rhodopseudomonas palustris (strain BisB18).